The primary structure comprises 262 residues: Hydroxyethylthiazole kinase (262 aa).

Residue Met-44 participates in substrate binding. Arg-118 and Thr-166 together coordinate ATP. Gly-193 contacts substrate.

This sequence belongs to the Thz kinase family. Requires Mg(2+) as cofactor.

The catalysed reaction is 5-(2-hydroxyethyl)-4-methylthiazole + ATP = 4-methyl-5-(2-phosphooxyethyl)-thiazole + ADP + H(+). Its pathway is cofactor biosynthesis; thiamine diphosphate biosynthesis; 4-methyl-5-(2-phosphoethyl)-thiazole from 5-(2-hydroxyethyl)-4-methylthiazole: step 1/1. Catalyzes the phosphorylation of the hydroxyl group of 4-methyl-5-beta-hydroxyethylthiazole (THZ). In Chlamydia felis (strain Fe/C-56) (Chlamydophila felis), this protein is Hydroxyethylthiazole kinase.